The following is a 116-amino-acid chain: Large ribosomal subunit protein bL19 (116 aa).

This sequence belongs to the bacterial ribosomal protein bL19 family.

This protein is located at the 30S-50S ribosomal subunit interface and may play a role in the structure and function of the aminoacyl-tRNA binding site. The sequence is that of Large ribosomal subunit protein bL19 from Fusobacterium nucleatum subsp. nucleatum (strain ATCC 25586 / DSM 15643 / BCRC 10681 / CIP 101130 / JCM 8532 / KCTC 2640 / LMG 13131 / VPI 4355).